A 272-amino-acid chain; its full sequence is uncharacterized protein (272 aa).

2 consecutive transmembrane segments (helical) span residues 9-29 (GGDI…ASEH) and 252-272 (SHIS…ISFI).

It localises to the membrane. This is an uncharacterized protein from Caenorhabditis elegans.